We begin with the raw amino-acid sequence, 1073 residues long: Ubiquitin carboxyl-terminal hydrolase 53 (1073 aa).

The USP domain maps to 30–351 (KGLLNEPGQN…QPLLLFYANP (322 aa)). The active-site Nucleophile is cysteine 41. Zn(2+) is bound by residues histidine 66, cysteine 68, cysteine 73, cysteine 76, histidine 132, cysteine 144, cysteine 149, histidine 152, cysteine 165, cysteine 168, cysteine 224, and cysteine 228. Histidine 301 (proton acceptor) is an active-site residue. Disordered stretches follow at residues 391–437 (LKEN…HIDQ) and 485–636 (LSHF…PKQK). Residues 407–418 (KFPTDNISSSNR) show a composition bias toward polar residues. Positions 524-541 (QSRASAQIISSSKSQILA) are enriched in low complexity. Over residues 553-563 (DNGTGYDTDSS) the composition is skewed to polar residues. Residues 612 to 627 (NISNKPKSSKDPSFSN) are compositionally biased toward low complexity.

It belongs to the peptidase C19 family. As to quaternary structure, interacts (via the C-terminal region) with the heterodimer TJP1:TJP2. In terms of tissue distribution, expressed predominantly in skeletal muscle and heart.

It is found in the cell junction. Its subcellular location is the tight junction. It carries out the reaction Thiol-dependent hydrolysis of ester, thioester, amide, peptide and isopeptide bonds formed by the C-terminal Gly of ubiquitin (a 76-residue protein attached to proteins as an intracellular targeting signal).. Its function is as follows. Deubiquitinase that mediates 'Lys-63'-linked deubiquitination of tight junction proteins, such as MARVELD2 and LSR, and which is involved in the survival of auditory hair cells and hearing. Specifically cleaves 'Lys-63'-linked polyubiquitin chains composed of at least 3 ubiquitin molecules, while it is not able to deubiquitinate substrates with shorter ubiquitin chains: recognizes ubiquitin chain in position S2 and catalyzes en bloc cleavage of polyubiquitin chains from substrate proteins. Probably acts by modulating the barrier properties and mechanical stability of tight junctions via deubiquitination of MARVELD2 and LSR. The chain is Ubiquitin carboxyl-terminal hydrolase 53 from Homo sapiens (Human).